The sequence spans 717 residues: Probable inactive histone-lysine N-methyltransferase SUVR2 (717 aa).

Basic and acidic residues predominate over residues 61-73 (QAIQESEEKKADE). The disordered stretch occupies residues 61-136 (QAIQESEEKK…LGSPTLEGPS (76 aa)). The segment covering 120–130 (SALASPSLGSP) has biased composition (low complexity). The Zn(2+) site is built by cysteine 445, cysteine 446, cysteine 449, cysteine 453, cysteine 462, cysteine 529, cysteine 533, cysteine 535, and cysteine 539. The region spanning 458–547 (MACRCATAFN…NCGNRVVQQG (90 aa)) is the Pre-SET domain. An SET domain is found at 550 to 679 (NKLQVFFTPN…AMEELTWDYG (130 aa)). S-adenosyl-L-methionine is bound by residues 561–563 (RGW) and 635–636 (NH). Cysteine 638 contacts Zn(2+). S-adenosyl-L-methionine is bound at residue tyrosine 678. Residues 690 to 706 (SPFHCQCGSDFCRVRKQ) form the Post-SET domain. The Zn(2+) site is built by cysteine 694, cysteine 696, and cysteine 701.

It belongs to the class V-like SAM-binding methyltransferase superfamily. Histone-lysine methyltransferase family. In terms of assembly, interacts with SUVR1, CHR19, CHR28 and itself. Interacts with CHR27.

The protein localises to the nucleus. It is found in the chromosome. Probable inactive histone-lysine methyltransferase that acts as regulator of transctiptional gene silencing independently of histone H3K9 methylation. Contributes to transcriptional gene silencing at RNA-directed DNA methylation (RdDM) target loci but also at RdDM-independent target loci. Forms a complex with SUVR1 and associates with the SNF2-related chromatin-remodeling proteins CHR19, CHR27, and CHR28, thereby mediating nucleosome positioning and transcriptional silencing. Does not possess histone-lysine methyltransferase activity in vitro, and the conserved catalytic sites of SUVR2 are dispensable for its function in transcriptional gene silencing. The sequence is that of Probable inactive histone-lysine N-methyltransferase SUVR2 (SUVR2) from Arabidopsis thaliana (Mouse-ear cress).